The following is a 114-amino-acid chain: Transmembrane protein 14C (114 aa).

A run of 4 helical transmembrane segments spans residues 8–28 (LVPL…GGII), 33–53 (AGSV…GLGS), 62–82 (NIWL…MRFY), and 87–107 (FMPA…LGIS).

Its subcellular location is the mitochondrion membrane. In terms of biological role, required for normal heme biosynthesis. The chain is Transmembrane protein 14C (TMEM14C) from Bos taurus (Bovine).